The chain runs to 198 residues: Molybdenum cofactor guanylyltransferase (198 aa).

GTP is bound by residues 14-16 (LAG), lysine 27, aspartate 73, and aspartate 103. Aspartate 103 serves as a coordination point for Mg(2+).

This sequence belongs to the MobA family. Monomer. Requires Mg(2+) as cofactor.

It localises to the cytoplasm. The catalysed reaction is Mo-molybdopterin + GTP + H(+) = Mo-molybdopterin guanine dinucleotide + diphosphate. Transfers a GMP moiety from GTP to Mo-molybdopterin (Mo-MPT) cofactor (Moco or molybdenum cofactor) to form Mo-molybdopterin guanine dinucleotide (Mo-MGD) cofactor. The sequence is that of Molybdenum cofactor guanylyltransferase from Pseudomonas aeruginosa (strain LESB58).